The following is an 886-amino-acid chain: MHDAFEPVPILEKLPLQIDCLAAWEEWLLVGTKQGHLLLYRIRKDVVPADVASPESGSCNRFEVTLEKSNKNFSKKIQQIHVVSQFKILVSLLENNIYVHDLLTFQQITTVSKAKGASLFTCDLQHTETGEEVLRMCVAVKKKLQLYFWKDREFHELQGDFSVPDVPKSMAWCENSICVGFKRDYYLIRVDGKGSIKELFPTGKQLEPLVAPLADGKVAVGQDDLTVVLNEEGICTQKCALNWTDIPVAMEHQPPYIIAVLPRYVEIRTFEPRLLVQSIELQRPRFITSGGSNIIYVASNHFVWRLIPVPMATQIQQLLQDKQFELALQLAEMKDDSDSEKQQQIHHIKNLYAFNLFCQKRFDESMQVFAKLGTDPTHVMGLYPDLLPTDYRKQLQYPNPLPVLSGAELEKAHLALIDYLTQKRSQLVKKLNDSDHQSSTSPLMEGTPTIKSKKKLLQIIDTTLLKCYLHTNVALVAPLLRLENNHCHIEESEHVLKKAHKYSELIILYEKKGLHEKALQVLVDQSKKANSPLKGHERTVQYLQHLGTENLHLIFSYSVWVLRDFPEDGLKIFTEDLPEVESLPRDRVLGFLIENFKGLAIPYLEHIIHVWEETGSRFHNCLIQLYCEKVQGLMKEYLLSFPAGKTPVPAGEEEGELGEYRQKLLMFLEISSYYDPGRLICDFPFDGLLEERALLLGRMGKHEQALFIYVHILKDTRMAEEYCHKHYDRNKDGNKDVYLSLLRMYLSPPSIHCLGPIKLELLEPKANLQAALQVLELHHSKLDTTKALNLLPANTQINDIRIFLEKVLEENAQKKRFNQVLKNLLHAEFLRVQEERILHQQVKCIITEEKVCMVCKKKIGNSAFARYPNGVVVHYFCSKEVNPADT.

In terms of domain architecture, CNH spans 15–294; sequence PLQIDCLAAW…RFITSGGSNI (280 aa). The CHCR repeat unit spans residues 573–750; the sequence is FTEDLPEVES…LLRMYLSPPS (178 aa).

The protein belongs to the VAM6/VPS39 family. Homooligomer. Interacts with TGFBR2 and, less efficiently, with TGFBR1; interaction with TGFBR2 is independent of the receptor kinase activity and of the presence of TGF-beta. Also interacts with ACVR2B, but not with BMPR2. Interacts with SMAD4, preferentially following TGF-beta treatment. Does not interact with SAMD2 or SMAD3. Component of the homotypic fusion and vacuole protein sorting (HOPS) complex; the core of which composed of the class C Vps proteins VPS11, VPS16, VPS18 and VPS33A, is associated with VPS39 and VPS41. Interacts with PLEKHM2; involved in VPS39 recruitment to ARL8B-containing lysosomes. Associates with adapter protein complex 3 (AP-3) and clathrin:AP-3 complexes. Interacts with STX17; this interaction is increased in the absence of TMEM39A. Interacts with RAB7, RAB2A and RAB2B. Interacts with RAB2A (GTP-bound); the interaction contributes to obtaining a functional HOPS complex that promotes autophagosome-lysosome membrane fusion driven by STX17-SNAP29-VAMP8. Interacts with RAB39A (GTP-bound) and RAB39B (GTP-bound); interaction with RAB39A contributes to obtaining a functional HOPS complex. As to quaternary structure, (Microbial infection) Interacts with SARS coronavirus-2/SARS-CoV-2 ORF3A protein; the interaction is direct and sequestrates VPS39, thereby preventing HOPS complex from interacting with the autophagosomal SNARE protein STX17. ORF3A enhances the interaction of VPS39 with VPS11 and VPS18, while its interaction with the VPS16:VPS33A module is attenuated. Widely expressed, with highest levels in heart, skeletal muscle, kidney, pancreas, brain, placenta and spleen.

It is found in the cytoplasm. The protein resides in the lysosome membrane. Its subcellular location is the late endosome membrane. Functionally, regulator of TGF-beta/activin signaling, inhibiting SMAD3- and activating SMAD2-dependent transcription. Acts by interfering with SMAD3/SMAD4 complex formation, this would lead to inhibition of SMAD3-dependent transcription and relieve SMAD3 inhibition of SMAD2-dependent promoters, thus increasing SMAD2-dependent transcription. Does not affect TGF-beta-induced SMAD2 or SMAD3 phosphorylation, nor SMAD2/SMAD4 complex formation. Plays a role in vesicle-mediated protein trafficking to lysosomal compartments including the endocytic membrane transport and autophagic pathways. Acts as a component of the HOPS endosomal tethering complex. This complex is proposed to be involved in the Rab5-to-Rab7 endosome conversion probably implicating MON1A/B, and via binding SNAREs and SNARE complexes to mediate tethering and docking events during SNARE-mediated membrane fusion. The HOPS complex is proposed to be recruited to Rab7 on the late endosomal membrane and to regulate late endocytic, phagocytic and autophagic traffic towards lysosomes. Involved in homotypic vesicle fusions between late endosomes and in heterotypic fusions between late endosomes and lysosomes. Required for fusion of endosomes and autophagosomes with lysosomes. This chain is Vam6/Vps39-like protein, found in Homo sapiens (Human).